Consider the following 36-residue polypeptide: AAAISCVGSPECPPKCRAQGCKNGKCMNRKCECYYC.

4 disulfide bridges follow: C6-C26, C12-C31, C16-C33, and C21-C36. A Cysteine amide modification is found at C36.

This sequence belongs to the short scorpion toxin superfamily. Potassium channel inhibitor family. Alpha-KTx 23 subfamily. As to expression, expressed by the venom gland.

It is found in the secreted. Functionally, voltage-gated potassium channel inhibitor. Selectively and irreversibly binds (K(d)=2.9 pM) and blocks hKv1.3/KCNA3 potassium channels of human T-lymphocytes. Weakly blocks hKCa3.1/KCNN4, mKv1.1/KCNA1, and hKv1.2/KCNA2 channels. In vivo, high doses (200 ug) produce no symptoms of intoxication when injected into mice. The protein is Potassium channel toxin alpha-KTx 23.1 of Vaejovis mexicanus smithi (Mexican scorpion).